Reading from the N-terminus, the 940-residue chain is Coatomer subunit beta (940 aa).

HEAT repeat units lie at residues 11-48, 90-125, 126-162, and 310-347; these read FLEA…NGDS, QEMI…KEPE, LLDP…VSNH, and SILE…SRNV.

In terms of assembly, oligomeric complex that consists of at least the alpha, beta, beta', gamma, delta, epsilon and zeta subunits.

It localises to the cytoplasm. Its subcellular location is the golgi apparatus membrane. It is found in the cytoplasmic vesicle. The protein localises to the COPI-coated vesicle membrane. In terms of biological role, the coatomer is a cytosolic protein complex that binds to dilysine motifs and reversibly associates with Golgi non-clathrin-coated vesicles, which further mediate biosynthetic protein transport from the ER, via the Golgi up to the trans Golgi network. Coatomer complex is required for budding from Golgi membranes, and is essential for the retrograde Golgi-to-ER transport of dilysine-tagged proteins. This is Coatomer subunit beta (sec26) from Schizosaccharomyces pombe (strain 972 / ATCC 24843) (Fission yeast).